The sequence spans 849 residues: Villin-1 (849 aa).

5 Gelsolin-like repeats span residues 30–107 (IEKS…DKFL), 147–213 (RVTE…EDGK), 262–335 (VPVE…TVEF), 405–475 (QEQL…PEMF), and 527–566 (AIQVDLAASSLNSSHCYILQAGGSFFTWLGSLSSPSDHNL). The disordered stretch occupies residues 739–849 (ETPERSLRKS…AVATGTPRRL (111 aa)). Low complexity-rich tracts occupy residues 747-782 (KSSSSSLPRRSPGTSSSEPTTPEQRAAARTFASAST) and 791-823 (PAALSPSLSTPSPSPRSRSSASSSPASWNSTPS).

This sequence belongs to the villin/gelsolin family.

The protein localises to the cytoplasm. Its subcellular location is the cytoskeleton. Ca(2+)-independent actin-binding protein. Binds actin microfilaments (MFs). Involved in actin filament bundling, severing and capping. Caps the barbed end of actin filaments and protects them from disassembly. Promotes VLN3-mediated MF severing. In Oryza sativa subsp. indica (Rice), this protein is Villin-1.